Here is a 171-residue protein sequence, read N- to C-terminus: uncharacterized protein (171 aa).

Positions Thr56 to Met83 are disordered. Residues Val57 to Ala77 show a composition bias toward polar residues. One can recognise a J domain in the interval Lys113 to Phe170.

This is an uncharacterized protein from Sinorhizobium sp.